Here is a 400-residue protein sequence, read N- to C-terminus: Subtilisin-like protease 2 (400 aa).

The N-terminal stretch at 1–20 (MKFSQSLIALAACFLPLIAA) is a signal peptide. Positions 21–119 (APEEAQHAKI…IERDGKVQAN (99 aa)) are excised as a propeptide. One can recognise an Inhibitor I9 domain in the interval 42–117 (SYIVVFNKGV…AWIERDGKVQ (76 aa)). A glycan (N-linked (GlcNAc...) asparagine) is linked at Asn-82. In terms of domain architecture, Peptidase S8 spans 128 to 400 (TWGLGRISHK…NLIAYNGNGA (273 aa)). Catalysis depends on charge relay system residues Asp-160, His-192, and Ser-345.

It belongs to the peptidase S8 family.

It localises to the secreted. Potently inhibited by the serine peptidase inhibitor chymostatin. Also inhibited by antpain and PMSF. In terms of biological role, major secreted subtilisin-like serine endopeptidase. Preferentially cleaves substrates containing hydrophobic residues at P4, positively charged residues at P3, small or flexible residues at P2, and large, bulky residues at P1. Mediates the degradation of collagen, the major structural protein in the mammalian host. Degrades the nonhelical regions of collagen that function in the cross-linking of the helical components. May function as virulence factor involved in epidermal wing necrosis observed in white nose syndrome (WNS) in bats. This is Subtilisin-like protease 2 from Pseudogymnoascus destructans (strain ATCC MYA-4855 / 20631-21) (Bat white-nose syndrome fungus).